Consider the following 206-residue polypeptide: LexA repressor (206 aa).

Positions 27–47 (YEEIRQNLGFRSLNAVFKHLK) form a DNA-binding region, H-T-H motif. Residues Ser120 and Lys157 each act as for autocatalytic cleavage activity in the active site.

The protein belongs to the peptidase S24 family. Homodimer.

The catalysed reaction is Hydrolysis of Ala-|-Gly bond in repressor LexA.. Functionally, represses a number of genes involved in the response to DNA damage (SOS response), including recA and lexA. In the presence of single-stranded DNA, RecA interacts with LexA causing an autocatalytic cleavage which disrupts the DNA-binding part of LexA, leading to derepression of the SOS regulon and eventually DNA repair. This is LexA repressor from Syntrophobacter fumaroxidans (strain DSM 10017 / MPOB).